The primary structure comprises 235 residues: Glycerol uptake facilitator protein 2 (235 aa).

The next 6 helical transmembrane spans lie at 4–24, 39–59, 62–82, 83–103, 134–154, and 165–185; these read FLGE…SGAA, FICL…GQFG, GHLN…PMAN, VWPY…IVII, VFNF…LLNL, and MVGL…GFAI. The NPA 1 motif lies at 65–67; that stretch reads NPA. An NPA 2 motif is present at residues 186–188; the sequence is NPA. The helical transmembrane segment at 210–230 threads the bilayer; the sequence is WGYAWVPMFGPLLGGILAAGL.

The protein belongs to the MIP/aquaporin (TC 1.A.8) family.

It is found in the cell membrane. Transporter that facilitates the transmembrane diffusion of water, dihydroxyacetone, glycerol and H(2)O(2). Is not permeable to urea and D/L-lactic acid. This is Glycerol uptake facilitator protein 2 from Lactiplantibacillus plantarum (strain ATCC BAA-793 / NCIMB 8826 / WCFS1) (Lactobacillus plantarum).